The primary structure comprises 264 residues: Thymidylate synthase (264 aa).

Arg21 contributes to the dUMP binding site. His51 lines the (6R)-5,10-methylene-5,6,7,8-tetrahydrofolate pocket. Residue 126–127 (RR) coordinates dUMP. Cys146 acts as the Nucleophile in catalysis. DUMP contacts are provided by residues 166–169 (RSCD), Asn177, and 207–209 (HLY). Asp169 contacts (6R)-5,10-methylene-5,6,7,8-tetrahydrofolate. Ala263 contributes to the (6R)-5,10-methylene-5,6,7,8-tetrahydrofolate binding site.

It belongs to the thymidylate synthase family. Bacterial-type ThyA subfamily. As to quaternary structure, homodimer.

Its subcellular location is the cytoplasm. It catalyses the reaction dUMP + (6R)-5,10-methylene-5,6,7,8-tetrahydrofolate = 7,8-dihydrofolate + dTMP. Its pathway is pyrimidine metabolism; dTTP biosynthesis. In terms of biological role, catalyzes the reductive methylation of 2'-deoxyuridine-5'-monophosphate (dUMP) to 2'-deoxythymidine-5'-monophosphate (dTMP) while utilizing 5,10-methylenetetrahydrofolate (mTHF) as the methyl donor and reductant in the reaction, yielding dihydrofolate (DHF) as a by-product. This enzymatic reaction provides an intracellular de novo source of dTMP, an essential precursor for DNA biosynthesis. This Aeromonas salmonicida (strain A449) protein is Thymidylate synthase.